Here is a 43-residue protein sequence, read N- to C-terminus: Protein PsbN (43 aa).

Residues 5–27 form a helical membrane-spanning segment; it reads TLVAIFISCLLVSFTGYAPYTAS.

The protein belongs to the PsbN family.

Its subcellular location is the plastid. The protein resides in the chloroplast thylakoid membrane. Functionally, may play a role in photosystem I and II biogenesis. This chain is Protein PsbN, found in Anthoceros angustus (Hornwort).